The following is a 756-amino-acid chain: Cartilage oligomeric matrix protein (756 aa).

An N-terminal signal peptide occupies residues 1–20; sequence MVLAAARVLLLTLAALGASG. A COMP N-terminal region spans residues 22-85; sequence GQMPLGGDLG…PARTPKLTVR (64 aa). An EGF-like 1 domain is found at 86–125; it reads PLSQCSPGFCFPGVACTETANGARCGPCPEGFTGNGSHCA. 10 disulfides stabilise this stretch: Cys90–Cys101, Cys95–Cys110, Cys113–Cys124, Cys130–Cys141, Cys135–Cys150, Cys183–Cys196, Cys190–Cys205, Cys228–Cys242, Cys236–Cys252, and Cys254–Cys265. The N-linked (GlcNAc...) asparagine glycan is linked to Asn120. Positions 126 to 178 constitute an EGF-like 2; calcium-binding domain; that stretch reads DVNECTAHPCFPRVRCINTSPGFRCEACPPGFSGPTHEGVGLAFAKANKQVCT. The EGF-like 3; calcium-binding domain maps to 179–218; the sequence is DINECETGQHNCVPNSVCVNTVGSFQCGPCQPGFVGDQAS. Positions 224–266 constitute an EGF-like 4 domain; it reads PQRFCPDGTPSPCHEKADCVLERDGSRSCVCAVGWAGNGLICG. TSP type-3 repeat units lie at residues 267–299, 300–335, 336–358, 359–394, 395–417, 418–455, 456–491, and 492–527; these read RDTD…NSGQ, EDVD…NPDQ, RNTD…NDDQ, KDTD…NSDQ, KDTD…NADQ, RDVD…NSAQ, QDSD…NPGQ, and EDMD…EVTL. A disordered region spans residues 322–502; it reads NEKDNCPLVR…DMDRDGVGDA (181 aa). Basic and acidic residues-rich tracts occupy residues 333-345, 351-369, and 415-425; these read PDQR…KWGD, RSQK…RGDA, and ADQRDVDHDFV. The Cell attachment site signature appears at 366–368; sequence RGD. The segment covering 466–475 has biased composition (acidic residues); the sequence is ACDDDDDNDG. Residues 526-756 form a mediates cell survival and induction of the IAP family of survival proteins region; it reads TLTDFRAFQT…DYEAQRLLQA (231 aa). The TSP C-terminal domain occupies 531 to 745; that stretch reads RAFQTVVLDP…LRYRCNDTIP (215 aa). An N-linked (GlcNAc...) asparagine glycan is attached at Asn741.

It belongs to the thrombospondin family. Pentamer; disulfide-linked. Exists in a more compact conformation in the presence of calcium and shows a more extended conformation in the absence of calcium. Interacts with ITGB3, ITGA5 and FN1. Binding to FN1 requires the presence of divalent cations (Ca(2+), Mg(2+) or Mn(2+)). The greatest amount of binding is seen in the presence of Mn(2+). Interacts with MATN1, MATN3, MATN4 and ACAN. Binds heparin, heparan sulfate and chondroitin sulfate. EDTA dimishes significantly its binding to ACAN and abolishes its binding to MATN3, MATN4 and chondroitin sulfate. Interacts with collagen I, II and IX, and interaction with these collagens is dependent on the presence of zinc ions. Interacts with ADAMTS12. Interacts with ITGA7. Ca(2+) is required as a cofactor. In terms of processing, proteolytically cleaved by metalloproteases ADAMTS4 and ADAMTS1 with ADAMTS4 showing more potent activity.

It localises to the secreted. The protein resides in the extracellular space. It is found in the extracellular matrix. Its function is as follows. Plays a role in the structural integrity of cartilage via its interaction with other extracellular matrix proteins such as the collagens and fibronectin. Can mediate the interaction of chondrocytes with the cartilage extracellular matrix through interaction with cell surface integrin receptors. Could play a role in the pathogenesis of osteoarthritis. Potent suppressor of apoptosis in both primary chondrocytes and transformed cells. Suppresses apoptosis by blocking the activation of caspase-3 and by inducing the IAP family of survival proteins (BIRC3, BIRC2, BIRC5 and XIAP). Essential for maintaining a vascular smooth muscle cells (VSMCs) contractile/differentiated phenotype under physiological and pathological stimuli. Maintains this phenotype of VSMCs by interacting with ITGA7. This Bos taurus (Bovine) protein is Cartilage oligomeric matrix protein (COMP).